We begin with the raw amino-acid sequence, 240 residues long: Ribosomal RNA small subunit methyltransferase G (240 aa).

Residues G79, F84, 130–131 (AE), and R149 contribute to the S-adenosyl-L-methionine site.

Belongs to the methyltransferase superfamily. RNA methyltransferase RsmG family.

The protein localises to the cytoplasm. Its function is as follows. Specifically methylates the N7 position of a guanine in 16S rRNA. The polypeptide is Ribosomal RNA small subunit methyltransferase G (Lactobacillus helveticus (strain DPC 4571)).